Here is a 236-residue protein sequence, read N- to C-terminus: 5'-methylthioadenosine/S-adenosylhomocysteine nucleosidase (236 aa).

The active-site Proton acceptor is Glu-12. Residues Gly-78, Met-153, and 174–175 contribute to the substrate site; that span reads ME. The active-site Proton donor is the Asp-198.

This sequence belongs to the PNP/UDP phosphorylase family. MtnN subfamily.

The catalysed reaction is S-adenosyl-L-homocysteine + H2O = S-(5-deoxy-D-ribos-5-yl)-L-homocysteine + adenine. The enzyme catalyses S-methyl-5'-thioadenosine + H2O = 5-(methylsulfanyl)-D-ribose + adenine. It catalyses the reaction 5'-deoxyadenosine + H2O = 5-deoxy-D-ribose + adenine. It participates in amino-acid biosynthesis; L-methionine biosynthesis via salvage pathway; S-methyl-5-thio-alpha-D-ribose 1-phosphate from S-methyl-5'-thioadenosine (hydrolase route): step 1/2. Functionally, catalyzes the irreversible cleavage of the glycosidic bond in both 5'-methylthioadenosine (MTA) and S-adenosylhomocysteine (SAH/AdoHcy) to adenine and the corresponding thioribose, 5'-methylthioribose and S-ribosylhomocysteine, respectively. Also cleaves 5'-deoxyadenosine, a toxic by-product of radical S-adenosylmethionine (SAM) enzymes, into 5-deoxyribose and adenine. This chain is 5'-methylthioadenosine/S-adenosylhomocysteine nucleosidase, found in Geobacillus thermodenitrificans (strain NG80-2).